A 224-amino-acid polypeptide reads, in one-letter code: MPQEEEAEYLFKIVIIGDSAVGKSNLLNRFTRNEFTEKTKATIGVDFGTKSIEIDNKTITAQCWDTAGQERFRAVTSGYYRGAVGAMIVYDITSKISFKNVTRWLNELREMAEQDILIMMVGNKSDLEMSREVPTKEAQAFAESNKISFLETSALNSTNVNQSFERLLTDIYHLVSSKKPMVVDDTQNWLVPNQGKKLTPLSDPAPQLTANTTSTHQEKKSGCC.

17–24 (GDSAVGKS) serves as a coordination point for GTP. Residues 39–47 (TKATIGVDF) carry the Effector region motif. GTP contacts are provided by residues 65–69 (DTAGQ) and 123–126 (NKSD). A disordered region spans residues 194-224 (QGKKLTPLSDPAPQLTANTTSTHQEKKSGCC). 2 S-geranylgeranyl cysteine lipidation sites follow: cysteine 223 and cysteine 224.

Belongs to the small GTPase superfamily. Rab family.

Its subcellular location is the membrane. The polypeptide is Ras-related protein Rab-11C (rab11C) (Dictyostelium discoideum (Social amoeba)).